The chain runs to 427 residues: UDP-N-acetylglucosamine 1-carboxyvinyltransferase (427 aa).

A phosphoenolpyruvate-binding site is contributed by 22–23 (KN). Arg-99 contributes to the UDP-N-acetyl-alpha-D-glucosamine binding site. The active-site Proton donor is Cys-123. Cys-123 is subject to 2-(S-cysteinyl)pyruvic acid O-phosphothioketal. UDP-N-acetyl-alpha-D-glucosamine contacts are provided by residues 128-132 (RPIDL), Asp-313, and Ile-335.

This sequence belongs to the EPSP synthase family. MurA subfamily.

It is found in the cytoplasm. It catalyses the reaction phosphoenolpyruvate + UDP-N-acetyl-alpha-D-glucosamine = UDP-N-acetyl-3-O-(1-carboxyvinyl)-alpha-D-glucosamine + phosphate. It functions in the pathway cell wall biogenesis; peptidoglycan biosynthesis. Cell wall formation. Adds enolpyruvyl to UDP-N-acetylglucosamine. The polypeptide is UDP-N-acetylglucosamine 1-carboxyvinyltransferase (Novosphingobium aromaticivorans (strain ATCC 700278 / DSM 12444 / CCUG 56034 / CIP 105152 / NBRC 16084 / F199)).